Consider the following 251-residue polypeptide: Tropomyosin-2 (251 aa).

A coiled-coil region spans residues 1-251 (MSGEEKLGKL…DTVADEPDDE (251 aa)).

Belongs to the tropomyosin family. Homodimer. In terms of tissue distribution, striated muscle specific.

This is Tropomyosin-2 (TPM2) from Podocoryna carnea (Hydrozoan).